A 478-amino-acid polypeptide reads, in one-letter code: FERM domain-containing protein B (478 aa).

Disordered stretches follow at residues Glu19–Ser39, Glu129–Thr196, and Lys202–Ser221. Composition is skewed to low complexity over residues Pro22–Ser39 and Glu129–Gly164. The region spanning Val48–Glu468 is the FERM domain. Residues Ser165–Ser179 are compositionally biased toward gly residues. 2 stretches are compositionally biased toward low complexity: residues Gly180–Gly189 and Gln204–Ser216.

The chain is FERM domain-containing protein B (frmB) from Dictyostelium discoideum (Social amoeba).